A 504-amino-acid polypeptide reads, in one-letter code: Glucose-6-phosphate isomerase (504 aa).

Glu333 functions as the Proton donor in the catalytic mechanism. Active-site residues include His364 and Lys473.

It belongs to the GPI family.

It localises to the cytoplasm. The catalysed reaction is alpha-D-glucose 6-phosphate = beta-D-fructose 6-phosphate. Its pathway is carbohydrate biosynthesis; gluconeogenesis. The protein operates within carbohydrate degradation; glycolysis; D-glyceraldehyde 3-phosphate and glycerone phosphate from D-glucose: step 2/4. Functionally, catalyzes the reversible isomerization of glucose-6-phosphate to fructose-6-phosphate. The sequence is that of Glucose-6-phosphate isomerase from Xanthomonas oryzae pv. oryzae (strain PXO99A).